A 336-amino-acid polypeptide reads, in one-letter code: tRNA N6-adenosine threonylcarbamoyltransferase (336 aa).

Fe cation contacts are provided by H114 and H118. Residues 136–140 (LVSGG), D169, G182, D186, and N275 each bind substrate. D301 provides a ligand contact to Fe cation.

Belongs to the KAE1 / TsaD family. The cofactor is Fe(2+).

It localises to the cytoplasm. It carries out the reaction L-threonylcarbamoyladenylate + adenosine(37) in tRNA = N(6)-L-threonylcarbamoyladenosine(37) in tRNA + AMP + H(+). Required for the formation of a threonylcarbamoyl group on adenosine at position 37 (t(6)A37) in tRNAs that read codons beginning with adenine. Is involved in the transfer of the threonylcarbamoyl moiety of threonylcarbamoyl-AMP (TC-AMP) to the N6 group of A37, together with TsaE and TsaB. TsaD likely plays a direct catalytic role in this reaction. The polypeptide is tRNA N6-adenosine threonylcarbamoyltransferase (Streptococcus mutans serotype c (strain ATCC 700610 / UA159)).